A 96-amino-acid polypeptide reads, in one-letter code: Co-chaperonin GroES (96 aa).

It belongs to the GroES chaperonin family. In terms of assembly, heptamer of 7 subunits arranged in a ring. Interacts with the chaperonin GroEL.

It is found in the cytoplasm. Its function is as follows. Together with the chaperonin GroEL, plays an essential role in assisting protein folding. The GroEL-GroES system forms a nano-cage that allows encapsulation of the non-native substrate proteins and provides a physical environment optimized to promote and accelerate protein folding. GroES binds to the apical surface of the GroEL ring, thereby capping the opening of the GroEL channel. This is Co-chaperonin GroES from Paracidovorax citrulli (strain AAC00-1) (Acidovorax citrulli).